A 133-amino-acid polypeptide reads, in one-letter code: Ribosome-binding factor A (133 aa).

This sequence belongs to the RbfA family. Monomer. Binds 30S ribosomal subunits, but not 50S ribosomal subunits or 70S ribosomes.

The protein resides in the cytoplasm. One of several proteins that assist in the late maturation steps of the functional core of the 30S ribosomal subunit. Associates with free 30S ribosomal subunits (but not with 30S subunits that are part of 70S ribosomes or polysomes). Required for efficient processing of 16S rRNA. May interact with the 5'-terminal helix region of 16S rRNA. This is Ribosome-binding factor A from Salmonella heidelberg (strain SL476).